Reading from the N-terminus, the 1121-residue chain is CRISPR-associated endonuclease Cas9 1 (1121 aa).

Asp-9 functions as the For RuvC-like nuclease domain in the catalytic mechanism. Residues Asp-9, Glu-509, and Glu-513 each coordinate Mg(2+). The region spanning 516–684 is the HNH Cas9-type domain; that stretch reads EDDEKKAIQK…VRKKFIERNL (169 aa). The active-site Proton acceptor for HNH nuclease domain is His-599. His-738 provides a ligand contact to Mg(2+).

The protein belongs to the CRISPR-associated protein Cas9 family. Subtype II-A subfamily. In terms of assembly, monomer. Binds crRNA and tracrRNA. Requires Mg(2+) as cofactor.

Its function is as follows. CRISPR (clustered regularly interspaced short palindromic repeat) is an adaptive immune system that provides protection against mobile genetic elements (viruses, transposable elements and conjugative plasmids). CRISPR clusters contain spacers, sequences complementary to antecedent mobile elements, and target invading nucleic acids. CRISPR clusters are transcribed and processed into CRISPR RNA (crRNA). In type II CRISPR systems correct processing of pre-crRNA requires a trans-encoded small RNA (tracrRNA), endogenous ribonuclease 3 (rnc) and this protein. The tracrRNA serves as a guide for ribonuclease 3-aided processing of pre-crRNA. Subsequently Cas9/crRNA/tracrRNA endonucleolytically cleaves linear or circular dsDNA target complementary to the spacer; Cas9 is inactive in the absence of the 2 guide RNAs (gRNA). Cas9 recognizes the protospacer adjacent motif (PAM) in the CRISPR repeat sequences to help distinguish self versus nonself, as targets within the bacterial CRISPR locus do not have PAMs. PAM recognition is also required for catalytic activity. Cuts target DNA when Cas9 and gRNAs are mixed. The chain is CRISPR-associated endonuclease Cas9 1 from Streptococcus thermophilus (strain ATCC BAA-491 / LMD-9).